Here is a 90-residue protein sequence, read N- to C-terminus: Small ribosomal subunit protein bS16 (90 aa).

Belongs to the bacterial ribosomal protein bS16 family.

In Bacillus velezensis (strain DSM 23117 / BGSC 10A6 / LMG 26770 / FZB42) (Bacillus amyloliquefaciens subsp. plantarum), this protein is Small ribosomal subunit protein bS16.